The primary structure comprises 351 residues: Photosystem II D2 protein (351 aa).

The helical transmembrane segment at 39 to 59 (TAYLAIGGWLTGTTFVTSWYT) threads the bilayer. Histidine 116 provides a ligand contact to chlorophyll a. The helical transmembrane segment at 123 to 139 (GFMLRQFEIARLVGIRP) threads the bilayer. Residues glutamine 128 and asparagine 141 each coordinate pheophytin a. Residues 151–164 (VFVSVFLMYPLGQS) traverse the membrane as a helical segment. Chlorophyll a is bound at residue histidine 196. A helical transmembrane segment spans residues 206–226 (GALLCAIHGATVENTLFEDGE). Residues histidine 213 and phenylalanine 260 each coordinate a plastoquinone. Histidine 213 contacts Fe cation. Histidine 267 lines the Fe cation pocket. A helical membrane pass occupies residues 277–293 (GLWTSSIGIIGLALNLR).

The protein belongs to the reaction center PufL/M/PsbA/D family. PSII is composed of 1 copy each of membrane proteins PsbA, PsbB, PsbC, PsbD, PsbE, PsbF, PsbH, PsbI, PsbJ, PsbK, PsbL, PsbM, PsbT, PsbX, PsbY, PsbZ, Psb30/Ycf12, peripheral proteins PsbO, CyanoQ (PsbQ), PsbU, PsbV and a large number of cofactors. It forms dimeric complexes. The D1/D2 heterodimer binds P680, chlorophylls that are the primary electron donor of PSII, and subsequent electron acceptors. It shares a non-heme iron and each subunit binds pheophytin, quinone, additional chlorophylls, carotenoids and lipids. There is also a Cl(-1) ion associated with D1 and D2, which is required for oxygen evolution. The PSII complex binds additional chlorophylls, carotenoids and specific lipids. serves as cofactor.

The protein localises to the cellular thylakoid membrane. It carries out the reaction 2 a plastoquinone + 4 hnu + 2 H2O = 2 a plastoquinol + O2. Its function is as follows. Photosystem II (PSII) is a light-driven water:plastoquinone oxidoreductase that uses light energy to abstract electrons from H(2)O, generating O(2) and a proton gradient subsequently used for ATP formation. It consists of a core antenna complex that captures photons, and an electron transfer chain that converts photonic excitation into a charge separation. The D1/D2 (PsbA/PsbD) reaction center heterodimer binds P680, the primary electron donor of PSII as well as several subsequent electron acceptors. D2 is needed for assembly of a stable PSII complex. The sequence is that of Photosystem II D2 protein from Synechococcus sp. (strain CC9605).